The chain runs to 260 residues: 5-oxoprolinase subunit A 2 (260 aa).

It belongs to the LamB/PxpA family. In terms of assembly, forms a complex composed of PxpA, PxpB and PxpC.

It carries out the reaction 5-oxo-L-proline + ATP + 2 H2O = L-glutamate + ADP + phosphate + H(+). Functionally, catalyzes the cleavage of 5-oxoproline to form L-glutamate coupled to the hydrolysis of ATP to ADP and inorganic phosphate. The sequence is that of 5-oxoprolinase subunit A 2 from Ralstonia nicotianae (strain ATCC BAA-1114 / GMI1000) (Ralstonia solanacearum).